The primary structure comprises 73 residues: UPF0235 protein HY04AAS1_1378 (73 aa).

Belongs to the UPF0235 family.

This Hydrogenobaculum sp. (strain Y04AAS1) protein is UPF0235 protein HY04AAS1_1378.